Reading from the N-terminus, the 125-residue chain is Antitoxin MazE5 (125 aa).

Forms a complex with cognate toxin MazF5.

In terms of biological role, antitoxin component of a type II toxin-antitoxin (TA) system. Upon expression in M.smegmatis neutralizes the effect of cognate toxin MazF5. This is Antitoxin MazE5 (mazE5) from Mycobacterium tuberculosis (strain ATCC 25618 / H37Rv).